Here is a 566-residue protein sequence, read N- to C-terminus: Viral IRF3-like protein (566 aa).

Disordered regions lie at residues 151–170 (PRPF…PAFC) and 176–236 (QTGA…VHTD).

It belongs to the IRF family. In terms of assembly, interacts with host SKP2. Interacts with host USP7.

In terms of biological role, plays a role in the inhibition of host immune response. Interferes with the transactivating potential of cellular IRFs IRF3 and IRF7 that play a critical role in the induction of IFNA and IFNB genes. Additionally, interferes with surface major histocompatibility complex class II (MHC-II) antigen presentation. The polypeptide is Viral IRF3-like protein (vIRF-3) (Human herpesvirus 8 type P (isolate GK18) (HHV-8)).